The chain runs to 299 residues: Protoheme IX farnesyltransferase (299 aa).

9 consecutive transmembrane segments (helical) span residues 26-46, 53-73, 94-114, 121-141, 149-169, 175-195, 217-239, 243-265, and 277-297; these read VNAL…PDGL, FAAT…NCLI, LHSV…LSVL, LTMW…TLLL, IVIG…AVSG, ALLL…SLAL, YTRL…PFAI, GWIY…WRLL, and FRFS…DHYL.

Belongs to the UbiA prenyltransferase family. Protoheme IX farnesyltransferase subfamily.

It localises to the cell inner membrane. The enzyme catalyses heme b + (2E,6E)-farnesyl diphosphate + H2O = Fe(II)-heme o + diphosphate. Its pathway is porphyrin-containing compound metabolism; heme O biosynthesis; heme O from protoheme: step 1/1. Its function is as follows. Converts heme B (protoheme IX) to heme O by substitution of the vinyl group on carbon 2 of heme B porphyrin ring with a hydroxyethyl farnesyl side group. This is Protoheme IX farnesyltransferase from Azoarcus sp. (strain BH72).